Consider the following 476-residue polypeptide: Bifunctional protein HldE (476 aa).

A ribokinase region spans residues 1–318 (MKVTLPDFRR…ENAIRGRAET (318 aa)). 195–198 (NLSE) contributes to the ATP binding site. Residue Asp-264 is part of the active site. Residues 344–476 (MTNGIFDILH…IIQSIKNGLG (133 aa)) are cytidylyltransferase.

The protein in the N-terminal section; belongs to the carbohydrate kinase PfkB family. This sequence in the C-terminal section; belongs to the cytidylyltransferase family. In terms of assembly, homodimer.

The enzyme catalyses D-glycero-beta-D-manno-heptose 7-phosphate + ATP = D-glycero-beta-D-manno-heptose 1,7-bisphosphate + ADP + H(+). It catalyses the reaction D-glycero-beta-D-manno-heptose 1-phosphate + ATP + H(+) = ADP-D-glycero-beta-D-manno-heptose + diphosphate. It functions in the pathway nucleotide-sugar biosynthesis; ADP-L-glycero-beta-D-manno-heptose biosynthesis; ADP-L-glycero-beta-D-manno-heptose from D-glycero-beta-D-manno-heptose 7-phosphate: step 1/4. Its pathway is nucleotide-sugar biosynthesis; ADP-L-glycero-beta-D-manno-heptose biosynthesis; ADP-L-glycero-beta-D-manno-heptose from D-glycero-beta-D-manno-heptose 7-phosphate: step 3/4. Catalyzes the phosphorylation of D-glycero-D-manno-heptose 7-phosphate at the C-1 position to selectively form D-glycero-beta-D-manno-heptose-1,7-bisphosphate. Its function is as follows. Catalyzes the ADP transfer from ATP to D-glycero-beta-D-manno-heptose 1-phosphate, yielding ADP-D-glycero-beta-D-manno-heptose. The protein is Bifunctional protein HldE of Yersinia enterocolitica serotype O:8 / biotype 1B (strain NCTC 13174 / 8081).